Consider the following 259-residue polypeptide: Phosphate import ATP-binding protein PstB 2 (259 aa).

The ABC transporter domain occupies 12–254; the sequence is ISARGLNVHY…PKEPLTQGYI (243 aa). ATP is bound at residue 44-51; sequence GPSGCGKS.

It belongs to the ABC transporter superfamily. Phosphate importer (TC 3.A.1.7) family. As to quaternary structure, the complex is composed of two ATP-binding proteins (PstB), two transmembrane proteins (PstC and PstA) and a solute-binding protein (PstS).

The protein localises to the cell inner membrane. It carries out the reaction phosphate(out) + ATP + H2O = ADP + 2 phosphate(in) + H(+). In terms of biological role, part of the ABC transporter complex PstSACB involved in phosphate import. Responsible for energy coupling to the transport system. In Paramagnetospirillum magneticum (strain ATCC 700264 / AMB-1) (Magnetospirillum magneticum), this protein is Phosphate import ATP-binding protein PstB 2.